The following is a 152-amino-acid chain: Proteolipid protein 2 (152 aa).

The region spanning 19–137 is the MARVEL domain; sequence FSRTRKGFLL…DAYITFPLRQ (119 aa). The next 3 membrane-spanning stretches (helical) occupy residues 25 to 45, 48 to 68, and 85 to 105; these read GFLL…FSTS, GYSF…VVYM, and FFRT…VLVE. N-linked (GlcNAc...) asparagine glycosylation occurs at N108. Residues 112-132 form a helical membrane-spanning segment; it reads IAAGALGLCAAGLFGYDAYIT.

It localises to the membrane. In terms of biological role, may play a role in cell differentiation in the intestinal epithelium. The protein is Proteolipid protein 2 (PLP2) of Bos taurus (Bovine).